A 234-amino-acid chain; its full sequence is 1-(5-phosphoribosyl)-5-[(5-phosphoribosylamino)methylideneamino] imidazole-4-carboxamide isomerase (234 aa).

Asp-9 (proton acceptor) is an active-site residue. The active-site Proton donor is the Asp-131.

This sequence belongs to the HisA/HisF family.

It is found in the cytoplasm. The enzyme catalyses 1-(5-phospho-beta-D-ribosyl)-5-[(5-phospho-beta-D-ribosylamino)methylideneamino]imidazole-4-carboxamide = 5-[(5-phospho-1-deoxy-D-ribulos-1-ylimino)methylamino]-1-(5-phospho-beta-D-ribosyl)imidazole-4-carboxamide. It participates in amino-acid biosynthesis; L-histidine biosynthesis; L-histidine from 5-phospho-alpha-D-ribose 1-diphosphate: step 4/9. The sequence is that of 1-(5-phosphoribosyl)-5-[(5-phosphoribosylamino)methylideneamino] imidazole-4-carboxamide isomerase from Staphylococcus aureus (strain MRSA252).